Reading from the N-terminus, the 904-residue chain is Toll-like receptor 3 (904 aa).

The first 23 residues, 1-23 (MRQTLPCIYFWGGLLPFGMLCAS), serve as a signal peptide directing secretion. The region spanning 24 to 51 (STTKCTVSHEVADCSHLKLTQVPDDLPT) is the LRRNT domain. At 24–704 (STTKCTVSHE…SCKDSAPFEL (681 aa)) the chain is on the lumenal side. Cys28 and Cys37 are joined by a disulfide. Residues Asn52, Asn57, and Asn70 are each glycosylated (N-linked (GlcNAc...) asparagine). LRR repeat units follow at residues 52-73 (NITV…NFTR), 76-97 (QLTS…LCQK), 100-121 (MLKV…TFAF), 124-145 (NLTE…PFVK), 148-168 (NLIT…GTQV), and 172-193 (NLQE…ELDI). Cysteines 95 and 122 form a disulfide. The N-linked (GlcNAc...) asparagine glycan is linked to Asn124. The N-linked (GlcNAc...) asparagine glycan is linked to Asn196. LRR repeat units follow at residues 198–219 (SLKK…CFHA) and 222–244 (RLFG…LCLE). Residues Asn247, Asn252, Asn265, Asn275, and Asn291 are each glycosylated (N-linked (GlcNAc...) asparagine). LRR repeat units lie at residues 249–270 (SIRN…TFLG), 275–296 (NLTM…SFAW), 299–320 (QLEY…SLHG), 323–344 (NVRY…ASLP), 356–377 (CLEH…MFTG), 380–400 (NLKY…TNET), 408–429 (PLHI…AFSW), 432–454 (HLEV…EWRG), 465–486 (YNKY…QRLM), 507–528 (NLTI…MLEG), 531–552 (KLEI…ANPG), 563–584 (HLHI…VFKD), 587–608 (ELKI…VFNN), and 611–632 (SLKS…VFGP). 2 N-linked (GlcNAc...) asparagine glycosylation sites follow: Asn398 and Asn413. The N-linked (GlcNAc...) asparagine glycan is linked to Asn507. Asn636 and Asn662 each carry an N-linked (GlcNAc...) asparagine glycan. Residues 645 to 698 (NPFDCTCESIAWFVNWINETHTNIPELSSHYLCNTPPHYHGFPVRLFDTSSCKD) form the LRRCT domain. 2 disulfide bridges follow: Cys649/Cys677 and Cys651/Cys696. A helical membrane pass occupies residues 705–725 (FFMINTSILLIFIFIVLLIHF). The Cytoplasmic segment spans residues 726 to 904 (EGWRISFYWN…VALGSKNSVH (179 aa)). The TIR domain maps to 754 to 897 (FEYAAYIIHA…AFRHKLQVAL (144 aa)). Residue Tyr759 is modified to Phosphotyrosine. Residues Lys765, Lys812, and Lys831 each participate in a glycyl lysine isopeptide (Lys-Gly) (interchain with G-Cter in ubiquitin) cross-link. At Tyr858 the chain carries Phosphotyrosine.

The protein belongs to the Toll-like receptor family. In terms of assembly, monomer and homodimer; dimerization is triggered by ligand-binding, the signaling unit is composed of one ds-RNA of around 40 bp and two TLR3 molecules, and lateral clustering of signaling units along the length of the ds-RNA ligand is required for TLR3 signal transduction. Interacts (via transmembrane domain) with UNC93B1; the interaction is required for transport from the ER to the endosomes. Interacts with SRC; upon binding of double-stranded RNA. Interacts with TICAM1 (via the TIR domain) in response to poly(I:C) and this interaction is enhanced in the presence of WDFY1. The tyrosine-phosphorylated form (via TIR domain) interacts with WDFY1 (via WD repeat 2) in response to poly(I:C). In terms of processing, heavily N-glycosylated, except on that part of the surface of the ectodomain that is involved in ligand binding. Post-translationally, TLR3 signaling requires a proteolytic cleavage mediated by cathepsins CTSB and CTSH, the cleavage occurs between amino acids 252 and 346. The cleaved form of TLR3 is the predominant form found in endosomes. Ubiquitinated by TRIM3; leading to recognition and sorting of polyubiquitinated TLR3 by the ESCRT complexes. Ubiquitinated by ZNRF1 via 'Lys-63'-linked ubiquitin chains; leading to TLR3 lysosomal trafficking and degradation. Ubiquitinated by RNF170 at Lys-765 via 'Lys-48'-linked ubiquitin chains; leading to TLR3 proteasomal degradation. Expressed at high level in placenta and pancreas. Also detected in CD11c+ immature dendritic cells. Only expressed in dendritic cells and not in other leukocytes, including monocyte precursors. TLR3 is the TLR that is expressed most strongly in the brain, especially in astrocytes, glia, and neurons.

It localises to the endoplasmic reticulum membrane. It is found in the endosome membrane. The protein localises to the early endosome. In terms of biological role, key component of innate and adaptive immunity. TLRs (Toll-like receptors) control host immune response against pathogens through recognition of molecular patterns specific to microorganisms. TLR3 is a nucleotide-sensing TLR which is activated by double-stranded RNA, a sign of viral infection. Acts via the adapter TRIF/TICAM1, leading to NF-kappa-B activation, IRF3 nuclear translocation, cytokine secretion and the inflammatory response. This chain is Toll-like receptor 3, found in Homo sapiens (Human).